The sequence spans 75 residues: DNA-directed RNA polymerase subunit epsilon (75 aa).

The protein belongs to the RNA polymerase subunit epsilon family. RNAP is composed of a core of 2 alpha, a beta and a beta' subunit. The core is associated with a delta subunit, and at least one of epsilon or omega. When a sigma factor is associated with the core the holoenzyme is formed, which can initiate transcription.

The catalysed reaction is RNA(n) + a ribonucleoside 5'-triphosphate = RNA(n+1) + diphosphate. A non-essential component of RNA polymerase (RNAP). This Lactobacillus johnsonii (strain CNCM I-12250 / La1 / NCC 533) protein is DNA-directed RNA polymerase subunit epsilon.